We begin with the raw amino-acid sequence, 409 residues long: Elongation factor 1-gamma (409 aa).

The GST N-terminal domain maps to serine 2–alanine 81. In terms of domain architecture, GST C-terminal spans threonine 86–leucine 212. The segment covering asparagine 219 to alanine 248 has biased composition (basic and acidic residues). The interval asparagine 219–glycine 261 is disordered. The EF-1-gamma C-terminal domain maps to proline 251–lysine 409.

EF-1 is composed of four subunits: alpha, beta, delta, and gamma.

Probably plays a role in anchoring the complex to other cellular components. This Schizosaccharomyces pombe (strain 972 / ATCC 24843) (Fission yeast) protein is Elongation factor 1-gamma (tef3).